The primary structure comprises 192 residues: dTTP/UTP pyrophosphatase (192 aa).

Asp71 (proton acceptor) is an active-site residue.

It belongs to the Maf family. YhdE subfamily. Requires a divalent metal cation as cofactor.

It localises to the cytoplasm. It catalyses the reaction dTTP + H2O = dTMP + diphosphate + H(+). The enzyme catalyses UTP + H2O = UMP + diphosphate + H(+). Nucleoside triphosphate pyrophosphatase that hydrolyzes dTTP and UTP. May have a dual role in cell division arrest and in preventing the incorporation of modified nucleotides into cellular nucleic acids. The polypeptide is dTTP/UTP pyrophosphatase (Clostridium kluyveri (strain NBRC 12016)).